Here is a 138-residue protein sequence, read N- to C-terminus: Acidic phospholipase A2 daboiatoxin A chain (138 aa).

An N-terminal signal peptide occupies residues 1-16; it reads MRTLWIMAVCLIGVEG. Disulfide bonds link Cys42–Cys131, Cys44–Cys60, Cys59–Cys111, Cys65–Cys138, Cys66–Cys104, Cys73–Cys97, and Cys91–Cys102. Positions 43, 45, and 47 each coordinate Ca(2+). Residue His63 is part of the active site. Position 64 (Asp64) interacts with Ca(2+). Asp105 is an active-site residue.

The protein belongs to the phospholipase A2 family. Group II subfamily. D49 sub-subfamily. In terms of assembly, heterodimer of A and B chain; non-covalently linked. The acidic protein (B chain) has phospholipase A2 activity and the A chain weakly inhibits the B chain enzymatic activity but potentiates its lethal potency. It depends on Ca(2+) as a cofactor. Expressed by the venom gland.

It is found in the secreted. The enzyme catalyses a 1,2-diacyl-sn-glycero-3-phosphocholine + H2O = a 1-acyl-sn-glycero-3-phosphocholine + a fatty acid + H(+). In terms of biological role, heterodimer (A and B chains): phospholipase A2 that acts as a presynaptic neurotoxin and shows a PLA2 activity of 1377 umol/min/mg. In vivo, induces edema and produces neurotoxic symptoms in mice. Also exhibits indirect hemolysis, a strong myonecrotic activity and cytotoxicity. PLA2 catalyzes the calcium-dependent hydrolysis of the 2-acyl groups in 3-sn-phosphoglycerides. Functionally, monomer: Snake venom phospholipase A2 (PLA2) that shows a PLA2 activity of 578 umol/min/mg. This Daboia siamensis (Eastern Russel's viper) protein is Acidic phospholipase A2 daboiatoxin A chain.